The following is a 136-amino-acid chain: Histone H3.1/H3.2 (136 aa).

Residues 1 to 42 (MARTKQTARKSTGGKAPRKQLASKAARKAAPATGGVKKPHRY) are disordered. Lysine 5 carries the N6,N6,N6-trimethyllysine; alternate modification. An N6,N6-dimethyllysine; alternate modification is found at lysine 5. N6-methyllysine; alternate is present on residues lysine 5 and lysine 10. Lysine 10 carries the N6-acetyllysine; alternate modification. Serine 11 carries the post-translational modification Phosphoserine. At lysine 15 the chain carries N6,N6-dimethyllysine; alternate. Lysine 15, lysine 19, lysine 24, lysine 28, and lysine 37 each carry N6-acetyllysine; alternate. N6-methyllysine; alternate is present on residues lysine 19, lysine 24, lysine 28, and lysine 37. Positions 19–32 (KQLASKAARKAAPA) are enriched in low complexity. Residues lysine 28 and lysine 37 each carry the N6,N6,N6-trimethyllysine; alternate modification. An N6,N6-dimethyllysine; alternate mark is found at lysine 28 and lysine 37. N6-acetyllysine occurs at positions 57 and 65. An N6,N6,N6-trimethyllysine; alternate modification is found at lysine 80. Lysine 80 is subject to N6,N6-dimethyllysine; alternate. Lysine 80 is modified (N6-methyllysine; alternate).

This sequence belongs to the histone H3 family. The nucleosome is a histone octamer containing two molecules each of H2A, H2B, H3 and H4 assembled in one H3-H4 heterotetramer and two H2A-H2B heterodimers. The octamer wraps approximately 147 bp of DNA. Post-translationally, phosphorylated by ark1 to form H3S10ph in a cell cycle-dependent manner during mitosis and meiosis. H3S10ph is also formed by ssp2, promotes subsequent H3K14ac formation by gcn5, and is required for transcriptional activation through TBP recruitment to the promoters. Dephosphorylation is performed by sds21. Mono-, di- and trimethylated by the COMPASS complex to form H3K4me1/2/3. H3K4me activates gene expression by regulating transcription elongation and plays a role in telomere length maintenance. H3K4me enrichment correlates with transcription levels, and occurs in a 5' to 3' gradient with H3K4me3 enrichment at the 5'-end of genes, shifting to H3K4me2 and then H3K4me1. Methylated by clr4 to form H3K9me1. H3K9me1 represents a specific tag for epigenetic transcriptional repression by recruiting swi6/HP1 to methylated histones. Targeting to histone probably involves clr3 and rik1. Essential for silencing of centromeres and directional switching of the mating type. Methylated by set2 to form H3K36me. H3K36me represses gene expression. Methylated by dot1 to form H3K79me. H3K79me is required for association of SIR proteins with telomeric regions and for telomeric silencing. The COMPASS-mediated formation of H3K4me2/3 and the dot1-mediated formation of H3K79me require H2BK123ub1. In terms of processing, acetylation of histone H3 leads to transcriptional activation. H3K14ac formation by gcn5 is promoted by H3S10ph. H3K14ac can also be formed by esa1. H3K56ac formation occurs predominantly in newly synthesized H3 molecules during G1, S and G2/M of the cell cycle and may be involved in DNA repair.

The protein localises to the nucleus. It localises to the chromosome. In terms of biological role, core component of nucleosome. Nucleosomes wrap and compact DNA into chromatin, limiting DNA accessibility to the cellular machineries which require DNA as a template. Histones thereby play a central role in transcription regulation, DNA repair, DNA replication and chromosomal stability. DNA accessibility is regulated via a complex set of post-translational modifications of histones, also called histone code, and nucleosome remodeling. This Schizosaccharomyces pombe (strain 972 / ATCC 24843) (Fission yeast) protein is Histone H3.1/H3.2 (hht1).